The following is a 650-amino-acid chain: MFPNKKTPLLDKIKTPAELRQLDRNSLRQLADELRKETISAVGVTGGHLGSGLGVIELTVALHYVFNTPKDALVWDVGHQTYPHKILTGRRDRIRTLRQRDGLSGFTQRAESEYDAFGAAHSSTSISAALGFAMASKLSDSDDKAVAIIGDGSMTAGMAYEAMNNAKAAGKRLIVILNDNEMSISPPVGALSSYLSRLISSRPFMNLRDIMRGVVNRMPKGLATAARKADEYARGMATGGTFFEELGFYYVGPVDGHNLDQLIPVLENVRDAKDGPILVHVVTRKGQGYAPAEAAKDKYHAVQRLDVVSGKQAKAPPGPPSYTSVFSEQLIKEAKQDDKIVTITAAMPTGTGLDRFQQYFPERMFDVGIAEQHAVTFAAGLAAAGYKPFCCLYSTFLQRGYDQLVHDVAIQNLPVRFAVDRAGLVGADGATHAGSFDLAFMVNLPNMVVMAPSDERELANMVHSMAHYDQGPISVRYPRGNGVGVSLEGEKEILPIGKGRLIRRGKKVAILSLGTRLEESLKAADRLDAQGLSTSVADMRFAKPLDEALTRQLLKSHQVIITIEEGALGGFATQVLTMASDEGLMDDGLKIRTLRLPDRFQPQDKQERQYAEAGLDADGIVAAVTAALQRNSKPVEVVELTTKVTEDMTL.

Residues H79 and 120-122 (AHS) contribute to the thiamine diphosphate site. Mg(2+) is bound at residue D151. Residues 152-153 (GS), N180, Y289, and E371 contribute to the thiamine diphosphate site. N180 is a binding site for Mg(2+).

This sequence belongs to the transketolase family. DXPS subfamily. As to quaternary structure, homodimer. Mg(2+) is required as a cofactor. It depends on thiamine diphosphate as a cofactor.

The catalysed reaction is D-glyceraldehyde 3-phosphate + pyruvate + H(+) = 1-deoxy-D-xylulose 5-phosphate + CO2. It participates in metabolic intermediate biosynthesis; 1-deoxy-D-xylulose 5-phosphate biosynthesis; 1-deoxy-D-xylulose 5-phosphate from D-glyceraldehyde 3-phosphate and pyruvate: step 1/1. Its function is as follows. Catalyzes the acyloin condensation reaction between C atoms 2 and 3 of pyruvate and glyceraldehyde 3-phosphate to yield 1-deoxy-D-xylulose-5-phosphate (DXP). The chain is 1-deoxy-D-xylulose-5-phosphate synthase 2 from Zymomonas mobilis subsp. mobilis (strain ATCC 31821 / ZM4 / CP4).